A 352-amino-acid chain; its full sequence is MSSEYLIRSLLMLFLALFSANASNWLYLAKLSSVGSISDEETCEKLRGLIQRQVQICKRNVEVMDAVRRGAQLAIDECQYQFRNRRWNCSTLESVPVFGKVVTQGTREAAFVYAISAASVAFAVTRACSSGELDKCGCDRNVHGVSPEGFQWSGCSDNIAYGVAFSQSFVDIRERSKGQSSNRALMNLHNNEAGRKAILNHMRVECKCHGVSGSCEVKTCWKAMPPFRKVGNVIKEKFDGATEVELRKVGTTKVLVPRNSQFKPHTDEDLVYLDPSPDFCEHDPRTPGIMGTAGRFCNKTSKAIDGCELMCCGRGFHTEEVEVVDRCSCKFHWCCYVKCKQCRKMVEMHTCR.

The N-terminal stretch at 1 to 22 (MSSEYLIRSLLMLFLALFSANA) is a signal peptide. Disulfide bonds link C78–C89, C128–C136, C138–C155, C206–C220, C208–C215, C280–C312, C297–C307, C311–C351, C327–C342, C329–C339, and C334–C335. N88 is a glycosylation site (N-linked (GlcNAc...) asparagine). The O-palmitoleoyl serine; by PORCN moiety is linked to residue S212. N-linked (GlcNAc...) asparagine glycosylation is present at N298.

This sequence belongs to the Wnt family. Palmitoleoylation is required for efficient binding to frizzled receptors. Depalmitoleoylation leads to Wnt signaling pathway inhibition. As to expression, caudal forebrain and neural keel, the floor plate, the gill slit and the developing pronephros.

It is found in the secreted. The protein localises to the extracellular space. Its subcellular location is the extracellular matrix. Ligand for members of the frizzled family of seven transmembrane receptors. Plays an important role in embryonic development. The chain is Protein Wnt-4a (wnt4a) from Danio rerio (Zebrafish).